Reading from the N-terminus, the 403-residue chain is D-alanyl-D-alanine carboxypeptidase DacA (403 aa).

The first 29 residues, 1 to 29, serve as a signal peptide directing secretion; the sequence is MNTIFSARIMKRLALTTALCTAFISAAHA. The active-site Acyl-ester intermediate is the Ser-73. Lys-76 serves as the catalytic Proton acceptor. Residue Ser-139 is part of the active site. Lys-242 is a binding site for substrate.

The protein belongs to the peptidase S11 family.

It is found in the cell inner membrane. The catalysed reaction is Preferential cleavage: (Ac)2-L-Lys-D-Ala-|-D-Ala. Also transpeptidation of peptidyl-alanyl moieties that are N-acyl substituents of D-alanine.. Its pathway is cell wall biogenesis; peptidoglycan biosynthesis. Its function is as follows. Removes C-terminal D-alanyl residues from sugar-peptide cell wall precursors. The polypeptide is D-alanyl-D-alanine carboxypeptidase DacA (dacA) (Escherichia coli O157:H7).